Reading from the N-terminus, the 118-residue chain is MEVRAMVREVRVSPQKARMVIDVIRGKPLRDALAVLQVLPQKTAPIALKLLRSAAANAEHNYDLDPDRLYVKRIYVDEGPRYKRWQPHARGRVGRKWRRTSHITVILDELPEKGAPRG.

It belongs to the universal ribosomal protein uL22 family. Part of the 50S ribosomal subunit.

In terms of biological role, this protein binds specifically to 23S rRNA; its binding is stimulated by other ribosomal proteins, e.g. L4, L17, and L20. It is important during the early stages of 50S assembly. It makes multiple contacts with different domains of the 23S rRNA in the assembled 50S subunit and ribosome. Functionally, the globular domain of the protein is located near the polypeptide exit tunnel on the outside of the subunit, while an extended beta-hairpin is found that lines the wall of the exit tunnel in the center of the 70S ribosome. This chain is Large ribosomal subunit protein uL22, found in Thermomicrobium roseum (strain ATCC 27502 / DSM 5159 / P-2).